Reading from the N-terminus, the 705-residue chain is Putative membrane protein SCO6666 (705 aa).

13 consecutive transmembrane segments (helical) span residues 16–36 (VMLLWGLFLLLGFGLGTGVFG), 144–164 (LHGIDGSAVSGVHVSGGPLLG), 177–197 (NAELISLPVVLVLLLVVFGGL), 201–221 (GLPLLVAVAGIAGAFLALFGF), 232–252 (IQVTTMLGLGLAVDYALLMLV), 280–300 (LFSGLTVAVSLAGLLVFPSTF), 306–326 (LAVAAVVVVDMLAALTLLPAL), 360–380 (VAVLAVAVPALLVVALPVTGM), 504–524 (ALTVLTGIFVLLFAFTGSVLL), 528–548 (TVATTLLSLGAALGAVVWVFQ), 561–581 (LGALSLTAPPLIIAIAFGLAM), 615–635 (VVTCAALLLAVVFGAFMTGGF), and 636–656 (SPILQIGLGLTLAVLIDATVV).

Belongs to the resistance-nodulation-cell division (RND) (TC 2.A.6) family. MmpL subfamily.

The protein localises to the cell membrane. The protein is Putative membrane protein SCO6666 of Streptomyces coelicolor (strain ATCC BAA-471 / A3(2) / M145).